A 206-amino-acid polypeptide reads, in one-letter code: uncharacterized protein (206 aa).

Helical transmembrane passes span I9–T29, L47–L67, F74–I94, and I150–F170.

It belongs to the Rht family.

It localises to the cell membrane. This is an uncharacterized protein from Synechocystis sp. (strain ATCC 27184 / PCC 6803 / Kazusa).